Consider the following 445-residue polypeptide: Argininosuccinate synthase (445 aa).

ATP is bound by residues 18–26 (AFSGGLDTS) and A44. Y100 is an L-citrulline binding site. Residues G130 and T132 each coordinate ATP. T132, N136, and D137 together coordinate L-aspartate. Residue N136 coordinates L-citrulline. D137 contacts ATP. L-citrulline-binding residues include R140 and S193. Residue D195 participates in ATP binding. L-citrulline contacts are provided by T202, E204, and E281.

Belongs to the argininosuccinate synthase family. Type 2 subfamily. In terms of assembly, homotetramer.

The protein resides in the cytoplasm. It carries out the reaction L-citrulline + L-aspartate + ATP = 2-(N(omega)-L-arginino)succinate + AMP + diphosphate + H(+). It functions in the pathway amino-acid biosynthesis; L-arginine biosynthesis; L-arginine from L-ornithine and carbamoyl phosphate: step 2/3. This Pasteurella multocida (strain Pm70) protein is Argininosuccinate synthase (argG).